Here is a 221-residue protein sequence, read N- to C-terminus: Translation initiation factor 6 (221 aa).

The protein belongs to the eIF-6 family.

Functionally, binds to the 50S ribosomal subunit and prevents its association with the 30S ribosomal subunit to form the 70S initiation complex. The protein is Translation initiation factor 6 of Methanospirillum hungatei JF-1 (strain ATCC 27890 / DSM 864 / NBRC 100397 / JF-1).